The chain runs to 296 residues: Probable redox regulatory protein BQ2027_MB0506C (296 aa).

The protein belongs to the Rv0495c family.

In terms of biological role, essential for maintaining intracellular redox homeostasis. This Mycobacterium bovis (strain ATCC BAA-935 / AF2122/97) protein is Probable redox regulatory protein BQ2027_MB0506C.